Here is a 1472-residue protein sequence, read N- to C-terminus: Type IV pilus biogenesis factor PilY1 homolog PD_1611 (1472 aa).

Positions 1170, 1172, 1174, 1176, and 1178 each coordinate Ca(2+). A compositionally biased stretch (polar residues) spans 1383-1397 (RGSRSSIGNSDTGAV). The segment at 1383–1403 (RGSRSSIGNSDTGAVSTGGDA) is disordered.

Belongs to the PilY1 family.

The protein resides in the fimbrium. Functionally, one of the three PilY1 homologs of X.fastidiosa, which are involved in bacterial twitching motility as component of the filamentous type IV pili (T4P). The twitching motility of this protein is enhanced by calcium, which may provide the bacterium an adaptive advantage in environments with high calcium concentrations. The protein is Type IV pilus biogenesis factor PilY1 homolog PD_1611 of Xylella fastidiosa (strain Temecula1 / ATCC 700964).